The primary structure comprises 433 residues: G-protein coupled receptor 22 (433 aa).

The Extracellular segment spans residues 1 to 45 (MCFSPILEINMQSESNITVRDDIDDINTNMYQPLSYPLSFQVSLT). The N-linked (GlcNAc...) asparagine glycan is linked to Asn16. Residues 46 to 66 (GFLMLEIVLGLGSNLTVLVLY) form a helical membrane-spanning segment. Residues 67 to 85 (CMKSNLINSVSNIITMNLH) are Cytoplasmic-facing. Residues 86 to 106 (VLDVIICVGCIPLTIVILLLS) form a helical membrane-spanning segment. Residues 107-115 (LESNTALIC) lie on the Extracellular side of the membrane. The chain crosses the membrane as a helical span at residues 116-136 (CFHEACVSFASVSTAINVFAI). Residues 137–156 (TLDRYDISVKPANRILTMGR) are Cytoplasmic-facing. A helical transmembrane segment spans residues 157–177 (AVMLMISIWIFSFFSFLIPFI). Residues 178-208 (EVNFFSLQSGNTWENKTLLCVSTNEYYTELG) lie on the Extracellular side of the membrane. A glycan (N-linked (GlcNAc...) asparagine) is linked at Asn192. The helical transmembrane segment at 209–229 (MYYHLLVQIPIFFFTVVVMLI) threads the bilayer. Topologically, residues 230 to 315 (TYTKILQALN…ERQKRVFRMS (86 aa)) are cytoplasmic. Residues 316–336 (LLIISTFLLCWTPISVLNTTI) form a helical membrane-spanning segment. At 337 to 349 (LCLGPSDLLVKLR) the chain is on the extracellular side. The chain crosses the membrane as a helical span at residues 350 to 370 (LCFLVMAYGTTIFHPLLYAFT). Residues 371–433 (RQKFQKVLKS…KCLVPQVVTD (63 aa)) are Cytoplasmic-facing.

Belongs to the G-protein coupled receptor 1 family. High expression in adult and fetal heart tissue. Expressed in the brain, with enrichment in the accumbens, amygdala, cerebellum, cortex, and hippocampus regions.

The protein resides in the cell membrane. Its function is as follows. Orphan G-protein coupled receptor. Seems to act through a G(i)/G(o) mediated pathway. May be involved in ciliogenesis. The polypeptide is G-protein coupled receptor 22 (Homo sapiens (Human)).